Here is a 352-residue protein sequence, read N- to C-terminus: Ion-translocating oxidoreductase complex subunit D (352 aa).

4 helical membrane passes run 20–40 (IMLLVVIAALPGIAAQTWFFG), 42–62 (GTLFQIVLAAITALVAEAIVL), 69–91 (VASHLQDYSALLTGLLLAVSIPP), and 123–143 (PAMIGYVVLLISFPVQMTSWL). At T187 the chain carries FMN phosphoryl threonine. The next 5 helical transmembrane spans lie at 215–235 (LAGVGWQWVNLAWLVGGVFLL), 242–262 (WHIPVSFLLTLALCAALGWLF), 267–287 (LASPQLHLLSGATMLGAFFIL), 301–321 (LIFGALAGVLVWLIRSFGGYP), and 322–342 (DGVAFAVLLANITVPLIDYYT).

This sequence belongs to the NqrB/RnfD family. In terms of assembly, the complex is composed of six subunits: RsxA, RsxB, RsxC, RsxD, RsxE and RsxG. Requires FMN as cofactor.

The protein localises to the cell inner membrane. Part of a membrane-bound complex that couples electron transfer with translocation of ions across the membrane. Required to maintain the reduced state of SoxR. This is Ion-translocating oxidoreductase complex subunit D from Salmonella dublin (strain CT_02021853).